The sequence spans 571 residues: Urease subunit alpha (571 aa).

Positions 133-571 (GGIDTHVHFV…LPLTQRYFLF (439 aa)) constitute a Urease domain. Residues His138, His140, and Lys221 each contribute to the Ni(2+) site. Lys221 is subject to N6-carboxylysine. His223 is a binding site for substrate. Ni(2+) contacts are provided by His250 and His276. Catalysis depends on His324, which acts as the Proton donor. Asp364 contacts Ni(2+).

This sequence belongs to the metallo-dependent hydrolases superfamily. Urease alpha subunit family. In terms of assembly, heterotrimer of UreA (gamma), UreB (beta) and UreC (alpha) subunits. Three heterotrimers associate to form the active enzyme. Ni cation is required as a cofactor. In terms of processing, carboxylation allows a single lysine to coordinate two nickel ions.

It is found in the cytoplasm. It catalyses the reaction urea + 2 H2O + H(+) = hydrogencarbonate + 2 NH4(+). It functions in the pathway nitrogen metabolism; urea degradation; CO(2) and NH(3) from urea (urease route): step 1/1. This Staphylococcus xylosus protein is Urease subunit alpha.